A 134-amino-acid polypeptide reads, in one-letter code: UPF0412 protein YaaI (134 aa).

Residues 1-23 (MKSVITISASLAISLMLCCTAQA) form the signal peptide.

It belongs to the UPF0412 family.

The protein is UPF0412 protein YaaI of Escherichia coli O127:H6 (strain E2348/69 / EPEC).